A 548-amino-acid polypeptide reads, in one-letter code: Chaperonin GroEL (548 aa).

ATP-binding positions include 29–32 (TLGP), Lys50, 86–90 (DGTTT), Gly414, 478–480 (NAA), and Asp494.

Belongs to the chaperonin (HSP60) family. As to quaternary structure, forms a cylinder of 14 subunits composed of two heptameric rings stacked back-to-back. Interacts with the co-chaperonin GroES.

The protein localises to the cytoplasm. It catalyses the reaction ATP + H2O + a folded polypeptide = ADP + phosphate + an unfolded polypeptide.. In terms of biological role, together with its co-chaperonin GroES, plays an essential role in assisting protein folding. The GroEL-GroES system forms a nano-cage that allows encapsulation of the non-native substrate proteins and provides a physical environment optimized to promote and accelerate protein folding. This Alcanivorax borkumensis (strain ATCC 700651 / DSM 11573 / NCIMB 13689 / SK2) protein is Chaperonin GroEL.